A 281-amino-acid chain; its full sequence is RNA polymerase sigma factor RpoH (281 aa).

Positions 52 to 121 (LILSHLRFVI…IHEYVLRNWR (70 aa)) are sigma-70 factor domain-2. The Interaction with polymerase core subunit RpoC signature appears at 76–79 (DLIQ). The sigma-70 factor domain-4 stretch occupies residues 226–277 (ALQSLDARSQDIIKARWLDDNKATLHDLAAKYNVSAERIRQLETNALKKLKS). Positions 250–269 (LHDLAAKYNVSAERIRQLET) form a DNA-binding region, H-T-H motif.

The protein belongs to the sigma-70 factor family. RpoH subfamily. In terms of assembly, interacts with the RNA polymerase core enzyme.

It localises to the cytoplasm. Its function is as follows. Sigma factors are initiation factors that promote the attachment of RNA polymerase to specific initiation sites and are then released. This sigma factor is involved in regulation of expression of heat shock genes. This Haemophilus influenzae (strain ATCC 51907 / DSM 11121 / KW20 / Rd) protein is RNA polymerase sigma factor RpoH.